Here is a 212-residue protein sequence, read N- to C-terminus: Ras-related protein Rab-15 (212 aa).

S17, G18, V19, G20, K21, T22, C23, S35, S39, and T40 together coordinate GTP. Residue T22 coordinates Mg(2+). Short sequence motifs (switch) lie at residues 31–45 (NEFH…GVDF) and 63–80 (DTAG…YYRR). The Mg(2+) site is built by T40 and D63. Residues G66, N121, K122, D124, S151, and A152 each contribute to the GTP site. The tract at residues 193-212 (LEEEEGKPEGPANSSKTCWC) is disordered. S-geranylgeranyl cysteine attachment occurs at residues C210 and C212. C212 bears the Cysteine methyl ester mark.

The protein belongs to the small GTPase superfamily. Rab family. The GTP bound form of RAB15 interacts with REP15. Interacts (GTP-bound form) with MICAL1, MICAL3, MICALCL, EHBP1 and EHBP1L1. Mg(2+) is required as a cofactor.

It localises to the cell membrane. The enzyme catalyses GTP + H2O = GDP + phosphate + H(+). Regulated by guanine nucleotide exchange factors (GEFs) which promote the exchange of bound GDP for free GTP. Regulated by GTPase activating proteins (GAPs) which increase the GTP hydrolysis activity. Inhibited by GDP dissociation inhibitors (GDIs). The small GTPases Rab are key regulators of intracellular membrane trafficking, from the formation of transport vesicles to their fusion with membranes. Rabs cycle between an inactive GDP-bound form and an active GTP-bound form that is able to recruit to membranes different sets of downstream effectors directly responsible for vesicle formation, movement, tethering and fusion. RAB15 may act in concert with RAB3A in regulating aspects of synaptic vesicle membrane flow within the nerve terminal. The protein is Ras-related protein Rab-15 of Homo sapiens (Human).